The chain runs to 76 residues: MDQALLDGGYRCYTGEKIDVYFNTAICQHSGNCVRGNGKLFNLKRKPWIMPDEVDVATVVKVIDTCPSGALKYRHK.

This is an uncharacterized protein from Escherichia coli O157:H7.